The sequence spans 355 residues: Uroporphyrinogen decarboxylase (355 aa).

Substrate contacts are provided by residues arginine 27–arginine 31, aspartate 78, tyrosine 155, serine 210, and histidine 328.

It belongs to the uroporphyrinogen decarboxylase family. As to quaternary structure, homodimer.

It localises to the cytoplasm. The enzyme catalyses uroporphyrinogen III + 4 H(+) = coproporphyrinogen III + 4 CO2. The protein operates within porphyrin-containing compound metabolism; protoporphyrin-IX biosynthesis; coproporphyrinogen-III from 5-aminolevulinate: step 4/4. Its function is as follows. Catalyzes the decarboxylation of four acetate groups of uroporphyrinogen-III to yield coproporphyrinogen-III. The polypeptide is Uroporphyrinogen decarboxylase (Azotobacter vinelandii (strain DJ / ATCC BAA-1303)).